The following is a 122-amino-acid chain: Large ribosomal subunit protein uL14 (122 aa).

It belongs to the universal ribosomal protein uL14 family. Part of the 50S ribosomal subunit. Forms a cluster with proteins L3 and L19. In the 70S ribosome, L14 and L19 interact and together make contacts with the 16S rRNA in bridges B5 and B8.

Binds to 23S rRNA. Forms part of two intersubunit bridges in the 70S ribosome. This is Large ribosomal subunit protein uL14 from Maricaulis maris (strain MCS10) (Caulobacter maris).